Reading from the N-terminus, the 360-residue chain is Peptide chain release factor 1 (360 aa).

The residue at position 235 (Q235) is an N5-methylglutamine.

Belongs to the prokaryotic/mitochondrial release factor family. Methylated by PrmC. Methylation increases the termination efficiency of RF1.

The protein resides in the cytoplasm. Its function is as follows. Peptide chain release factor 1 directs the termination of translation in response to the peptide chain termination codons UAG and UAA. This chain is Peptide chain release factor 1, found in Cupriavidus taiwanensis (strain DSM 17343 / BCRC 17206 / CCUG 44338 / CIP 107171 / LMG 19424 / R1) (Ralstonia taiwanensis (strain LMG 19424)).